Reading from the N-terminus, the 118-residue chain is Large ribosomal subunit protein bL20 (118 aa).

Belongs to the bacterial ribosomal protein bL20 family.

Binds directly to 23S ribosomal RNA and is necessary for the in vitro assembly process of the 50S ribosomal subunit. It is not involved in the protein synthesizing functions of that subunit. This is Large ribosomal subunit protein bL20 from Thermotoga petrophila (strain ATCC BAA-488 / DSM 13995 / JCM 10881 / RKU-1).